The sequence spans 298 residues: Protease HtpX homolog (298 aa).

A run of 2 helical transmembrane segments spans residues 14–34 (VVLL…AGYL) and 39–59 (YAMG…SMIF). Histidine 143 contributes to the Zn(2+) binding site. Glutamate 144 is an active-site residue. Histidine 147 serves as a coordination point for Zn(2+). The next 2 membrane-spanning stretches (helical) occupy residues 158–178 (IAVA…RMLW) and 197–217 (IITL…ASLI). Zn(2+) is bound at residue glutamate 226.

Belongs to the peptidase M48B family. Zn(2+) serves as cofactor.

It is found in the cell membrane. This is Protease HtpX homolog from Streptococcus pyogenes serotype M28 (strain MGAS6180).